A 374-amino-acid chain; its full sequence is Lactoyl-CoA dehydratase subunit beta (374 aa).

It belongs to the FldB/FldC dehydratase alpha/beta subunit family. In terms of assembly, heterodimer of an alpha (LcdA) and a beta (LcdB) subunit. The cofactor is [4Fe-4S] cluster. FMN is required as a cofactor. Requires riboflavin as cofactor. Mg(2+) serves as cofactor.

It catalyses the reaction (R)-lactoyl-CoA = acryloyl-CoA + H2O. The enzyme catalyses (2R)-hydroxybutanoyl-CoA = (2E)-butenoyl-CoA + H2O. Its activity is regulated as follows. Activated by the LcdC protein. Involved in the acrylate pathway for the conversion of D-lactic acid to propionic acid. Catalyzes the reversible dehydration of Lactoyl-CoA and 2-hydroxybutyroyl-CoA to acryloyl-CoA and crotonyl-CoA, respectively. The chain is Lactoyl-CoA dehydratase subunit beta (lcdB) from Anaerotignum propionicum (Clostridium propionicum).